Here is an 88-residue protein sequence, read N- to C-terminus: Phosphocarrier protein HPr (88 aa).

One can recognise an HPr domain in the interval 1–88 (MEQNSYVIID…DVLSKEGLTK (88 aa)). His-15 functions as the Pros-phosphohistidine intermediate in the catalytic mechanism. At Ser-46 the chain carries Phosphoserine; by HPrK/P.

It is found in the cytoplasm. Phosphorylation on Ser-46 inhibits the phosphoryl transfer from enzyme I to HPr. In terms of biological role, general (non sugar-specific) component of the phosphoenolpyruvate-dependent sugar phosphotransferase system (sugar PTS). This major carbohydrate active-transport system catalyzes the phosphorylation of incoming sugar substrates concomitantly with their translocation across the cell membrane. The phosphoryl group from phosphoenolpyruvate (PEP) is transferred to the phosphoryl carrier protein HPr by enzyme I. Phospho-HPr then transfers it to the PTS EIIA domain. P-Ser-HPr interacts with the catabolite control protein A (CcpA), forming a complex that binds to DNA at the catabolite response elements cre, operator sites preceding a large number of catabolite-regulated genes. Thus, P-Ser-HPr is a corepressor in carbon catabolite repression (CCR), a mechanism that allows bacteria to coordinate and optimize the utilization of available carbon sources. P-Ser-HPr also plays a role in inducer exclusion, in which it probably interacts with several non-PTS permeases and inhibits their transport activity. The polypeptide is Phosphocarrier protein HPr (ptsH) (Staphylococcus aureus (strain MSSA476)).